Consider the following 378-residue polypeptide: Ferrochelatase (378 aa).

Residues His-214 and Glu-295 each coordinate Fe cation.

It belongs to the ferrochelatase family.

It is found in the cytoplasm. It catalyses the reaction heme b + 2 H(+) = protoporphyrin IX + Fe(2+). The protein operates within porphyrin-containing compound metabolism; protoheme biosynthesis; protoheme from protoporphyrin-IX: step 1/1. Functionally, catalyzes the ferrous insertion into protoporphyrin IX. This Hydrogenovibrio crunogenus (strain DSM 25203 / XCL-2) (Thiomicrospira crunogena) protein is Ferrochelatase.